Consider the following 209-residue polypeptide: ATP phosphoribosyltransferase (209 aa).

The protein belongs to the ATP phosphoribosyltransferase family. Short subfamily. Heteromultimer composed of HisG and HisZ subunits.

The protein resides in the cytoplasm. The catalysed reaction is 1-(5-phospho-beta-D-ribosyl)-ATP + diphosphate = 5-phospho-alpha-D-ribose 1-diphosphate + ATP. It participates in amino-acid biosynthesis; L-histidine biosynthesis; L-histidine from 5-phospho-alpha-D-ribose 1-diphosphate: step 1/9. Its function is as follows. Catalyzes the condensation of ATP and 5-phosphoribose 1-diphosphate to form N'-(5'-phosphoribosyl)-ATP (PR-ATP). Has a crucial role in the pathway because the rate of histidine biosynthesis seems to be controlled primarily by regulation of HisG enzymatic activity. The polypeptide is ATP phosphoribosyltransferase (Caldicellulosiruptor saccharolyticus (strain ATCC 43494 / DSM 8903 / Tp8T 6331)).